The primary structure comprises 240 residues: uncharacterized protein (240 aa).

Residues 93–160 (QEASGCTVGE…AGGGAAASGQ (68 aa)) form a disordered region. Composition is skewed to low complexity over residues 110 to 119 (AQPSQPAQGG) and 129 to 150 (GGAEEAGGAQASQPAESAPAEN).

This is an uncharacterized protein from Streptomyces viridochromogenes.